The sequence spans 205 residues: MSSMNPEYDYLFKLLLIGDSGVGKSCLLLRFADDTYTESYISTIGVDFKIRTIELDGKTIKLQIWDTAGQERFRTITSSYYRGAHGIIVVYDVTDQESFNNVKQWLQEIDRYASENVNKLLVGNKCDLTTKKVVDYTTAKEFADSLGIPFLETSAKNATNVEQSFMTMAAEIKKRMGPGATAGGAEKSNVKIQSTPVKQSGGGCC.

At S2 the chain carries N-acetylserine. Residues S20, G21, G23, K24, S25, C26, E38, and T43 each coordinate GTP. Mg(2+) is bound at residue S25. Residues 34 to 48 carry the Switch 1 motif; it reads DTYTESYISTIGVDF. T43 serves as a coordination point for Mg(2+). Residues K49 and K61 each participate in a glycyl lysine isopeptide (Lys-Gly) (interchain with G-Cter in ubiquitin) cross-link. D66 provides a ligand contact to Mg(2+). Positions 66 to 83 match the Switch 2 motif; the sequence is DTAGQERFRTITSSYYRG. 6 residues coordinate GTP: G69, N124, K125, D127, A155, and K156. The tract at residues 178–205 is disordered; that stretch reads PGATAGGAEKSNVKIQSTPVKQSGGGCC. Residue S194 is modified to Phosphoserine. 2 S-geranylgeranyl cysteine lipidation sites follow: C204 and C205.

This sequence belongs to the small GTPase superfamily. Rab family. In terms of assembly, may interact with YIPF5. Interacts with C9orf72; the interaction mediates recruitment of RAB1A to the ATG1/ULK1 kinase complex. Interacts with GDI1; this promotes dissociation from membranes. It depends on Mg(2+) as a cofactor. Phosphorylated by CDK1 kinase during mitosis. In terms of processing, ubiquitinated via 'Lys-11'-linked ubiquitination on Lys-49 and Lys-61; impairing the recruitment of guanosine diphosphate (GDP) dissociation inhibitor 1/GDI1.

It is found in the golgi apparatus. The protein localises to the endoplasmic reticulum. Its subcellular location is the early endosome. The protein resides in the cytoplasm. It localises to the cytosol. It is found in the membrane. The protein localises to the melanosome. The catalysed reaction is GTP + H2O = GDP + phosphate + H(+). Its activity is regulated as follows. Regulated by guanine nucleotide exchange factors (GEFs) which promote the exchange of bound GDP for free GTP. Regulated by GTPase activating proteins (GAPs) which increase the GTP hydrolysis activity. Inhibited by GDP dissociation inhibitors (GDIs). Its function is as follows. The small GTPases Rab are key regulators of intracellular membrane trafficking, from the formation of transport vesicles to their fusion with membranes. Rabs cycle between an inactive GDP-bound form and an active GTP-bound form that is able to recruit to membranes different sets of downstream effectors directly responsible for vesicle formation, movement, tethering and fusion. RAB1A regulates vesicular protein transport from the endoplasmic reticulum (ER) to the Golgi compartment and on to the cell surface, and plays a role in IL-8 and growth hormone secretion. Required to modulate the compacted morphology of the Golgi. Regulates the level of CASR present at the cell membrane. Plays a role in cell adhesion and cell migration, via its role in protein trafficking. Plays a role in autophagosome assembly and cellular defense reactions against pathogenic bacteria. Plays a role in microtubule-dependent protein transport by early endosomes and in anterograde melanosome transport. The polypeptide is Ras-related protein Rab-1A (RAB1A) (Canis lupus familiaris (Dog)).